Consider the following 388-residue polypeptide: S-adenosylmethionine synthase (388 aa).

Residue histidine 17 coordinates ATP. Residue aspartate 19 participates in Mg(2+) binding. Glutamate 45 provides a ligand contact to K(+). L-methionine is bound by residues glutamate 58 and glutamine 102. The tract at residues glutamine 102–alanine 112 is flexible loop. ATP-binding positions include aspartate 167–lysine 169, aspartate 241, arginine 247–lysine 248, alanine 264, and lysine 268. Residue aspartate 241 participates in L-methionine binding. Lysine 272 contributes to the L-methionine binding site.

This sequence belongs to the AdoMet synthase family. Homotetramer; dimer of dimers. Mg(2+) serves as cofactor. The cofactor is K(+).

Its subcellular location is the cytoplasm. It catalyses the reaction L-methionine + ATP + H2O = S-adenosyl-L-methionine + phosphate + diphosphate. It functions in the pathway amino-acid biosynthesis; S-adenosyl-L-methionine biosynthesis; S-adenosyl-L-methionine from L-methionine: step 1/1. Catalyzes the formation of S-adenosylmethionine (AdoMet) from methionine and ATP. The overall synthetic reaction is composed of two sequential steps, AdoMet formation and the subsequent tripolyphosphate hydrolysis which occurs prior to release of AdoMet from the enzyme. The chain is S-adenosylmethionine synthase from Maricaulis maris (strain MCS10) (Caulobacter maris).